Consider the following 36-residue polypeptide: U14-ctenitoxin-Co1b (36 aa).

As to expression, expressed by the venom gland.

It is found in the secreted. In terms of biological role, not toxic to mice by intracerebroventricular injection. This is U14-ctenitoxin-Co1b from Ctenus ornatus (Brazilian spider).